We begin with the raw amino-acid sequence, 360 residues long: DNA replication and repair protein RecF (360 aa).

An ATP-binding site is contributed by 30–37 (GDNAQGKT).

This sequence belongs to the RecF family.

It localises to the cytoplasm. The RecF protein is involved in DNA metabolism; it is required for DNA replication and normal SOS inducibility. RecF binds preferentially to single-stranded, linear DNA. It also seems to bind ATP. The sequence is that of DNA replication and repair protein RecF from Lachnoclostridium phytofermentans (strain ATCC 700394 / DSM 18823 / ISDg) (Clostridium phytofermentans).